The chain runs to 325 residues: UPF0285 protein MmarC6_0247 (325 aa).

It belongs to the UPF0285 family.

This is UPF0285 protein MmarC6_0247 from Methanococcus maripaludis (strain C6 / ATCC BAA-1332).